The following is a 235-amino-acid chain: Phosphoribosylaminoimidazole-succinocarboxamide synthase (235 aa).

Belongs to the SAICAR synthetase family.

It carries out the reaction 5-amino-1-(5-phospho-D-ribosyl)imidazole-4-carboxylate + L-aspartate + ATP = (2S)-2-[5-amino-1-(5-phospho-beta-D-ribosyl)imidazole-4-carboxamido]succinate + ADP + phosphate + 2 H(+). It participates in purine metabolism; IMP biosynthesis via de novo pathway; 5-amino-1-(5-phospho-D-ribosyl)imidazole-4-carboxamide from 5-amino-1-(5-phospho-D-ribosyl)imidazole-4-carboxylate: step 1/2. The sequence is that of Phosphoribosylaminoimidazole-succinocarboxamide synthase from Thermococcus kodakarensis (strain ATCC BAA-918 / JCM 12380 / KOD1) (Pyrococcus kodakaraensis (strain KOD1)).